A 157-amino-acid chain; its full sequence is Increased recombination centers protein 23 (157 aa).

Topologically, residues 1 to 6 (MIEALE) are cytoplasmic. A helical transmembrane segment spans residues 7–29 (IVLLLVIQSLQYICRTCIAFLLI). Topologically, residues 30–33 (PFLG) are lumenal. Residues 34–56 (LYAFDLFLYVYRMILYLSQMFNY) form a helical membrane-spanning segment. The Cytoplasmic segment spans residues 57 to 157 (KRKLGRSKTN…EEGYYIAGSI (101 aa)).

Its subcellular location is the endoplasmic reticulum membrane. In terms of biological role, is probably involved in a pathway contributing to genomic integrity. The protein is Increased recombination centers protein 23 (IRC23) of Saccharomyces cerevisiae (strain ATCC 204508 / S288c) (Baker's yeast).